The sequence spans 89 residues: Small ribosomal subunit protein uS15 (89 aa).

Belongs to the universal ribosomal protein uS15 family. In terms of assembly, part of the 30S ribosomal subunit. Forms a bridge to the 50S subunit in the 70S ribosome, contacting the 23S rRNA.

One of the primary rRNA binding proteins, it binds directly to 16S rRNA where it helps nucleate assembly of the platform of the 30S subunit by binding and bridging several RNA helices of the 16S rRNA. Functionally, forms an intersubunit bridge (bridge B4) with the 23S rRNA of the 50S subunit in the ribosome. This is Small ribosomal subunit protein uS15 from Beutenbergia cavernae (strain ATCC BAA-8 / DSM 12333 / CCUG 43141 / JCM 11478 / NBRC 16432 / NCIMB 13614 / HKI 0122).